Reading from the N-terminus, the 174-residue chain is Gamma-crystallin D (174 aa).

Beta/gamma crystallin 'Greek key' domains follow at residues 2-40 (GKIT…RVDS) and 41-83 (GCWM…RLIP). The connecting peptide stretch occupies residues 84–87 (HAGS). Beta/gamma crystallin 'Greek key' domains are found at residues 88–128 (HRIR…NVLE) and 129–171 (GCWV…RRVM).

This sequence belongs to the beta/gamma-crystallin family. As to expression, detected in the superior olivary complex and fibers of the ventral aoustic stria of the auditory hindbrain.

Its function is as follows. Crystallins are the dominant structural components of the vertebrate eye lens. The polypeptide is Gamma-crystallin D (Crygd) (Rattus norvegicus (Rat)).